The following is a 474-amino-acid chain: ATP synthase subunit beta 2 (474 aa).

153–160 (GGAGVGKT) contributes to the ATP binding site.

Belongs to the ATPase alpha/beta chains family. In terms of assembly, F-type ATPases have 2 components, CF(1) - the catalytic core - and CF(0) - the membrane proton channel. CF(1) has five subunits: alpha(3), beta(3), gamma(1), delta(1), epsilon(1). CF(0) has three main subunits: a(1), b(2) and c(9-12). The alpha and beta chains form an alternating ring which encloses part of the gamma chain. CF(1) is attached to CF(0) by a central stalk formed by the gamma and epsilon chains, while a peripheral stalk is formed by the delta and b chains.

It localises to the cell inner membrane. The catalysed reaction is ATP + H2O + 4 H(+)(in) = ADP + phosphate + 5 H(+)(out). Its function is as follows. Produces ATP from ADP in the presence of a proton gradient across the membrane. The catalytic sites are hosted primarily by the beta subunits. The sequence is that of ATP synthase subunit beta 2 from Syntrophotalea carbinolica (strain DSM 2380 / NBRC 103641 / GraBd1) (Pelobacter carbinolicus).